A 125-amino-acid polypeptide reads, in one-letter code: Large ribosomal subunit protein uL22c (125 aa).

It belongs to the universal ribosomal protein uL22 family. In terms of assembly, part of the 50S ribosomal subunit.

Its subcellular location is the plastid. The protein localises to the chloroplast. This protein binds specifically to 23S rRNA. Its function is as follows. The globular domain of the protein is located near the polypeptide exit tunnel on the outside of the subunit, while an extended beta-hairpin is found that lines the wall of the exit tunnel in the center of the 70S ribosome. This Huperzia lucidula (Shining clubmoss) protein is Large ribosomal subunit protein uL22c (rpl22).